Consider the following 152-residue polypeptide: 1,4-dihydroxy-2-naphthoyl-CoA hydrolase (152 aa).

D20 is an active-site residue.

This sequence belongs to the 4-hydroxybenzoyl-CoA thioesterase family. DHNA-CoA hydrolase subfamily.

It catalyses the reaction 1,4-dihydroxy-2-naphthoyl-CoA + H2O = 1,4-dihydroxy-2-naphthoate + CoA + H(+). Its pathway is cofactor biosynthesis; phylloquinone biosynthesis. It participates in quinol/quinone metabolism; 1,4-dihydroxy-2-naphthoate biosynthesis; 1,4-dihydroxy-2-naphthoate from chorismate: step 7/7. In terms of biological role, catalyzes the hydrolysis of 1,4-dihydroxy-2-naphthoyl-CoA (DHNA-CoA) to 1,4-dihydroxy-2-naphthoate (DHNA), a reaction involved in phylloquinone (vitamin K1) biosynthesis. The protein is 1,4-dihydroxy-2-naphthoyl-CoA hydrolase of Synechococcus sp. (strain CC9311).